The following is a 385-amino-acid chain: Putative F-box protein At1g47765 (385 aa).

Positions 1-19 are enriched in basic residues; the sequence is MEQQKQKKRKVVSKSKRTQ. Positions 1 to 24 are disordered; the sequence is MEQQKQKKRKVVSKSKRTQSKSAS. An F-box domain is found at 20–69; it reads SKSASSLPLDLTSEILLRLPEKSIARFRCVSKLWLSITTDPYFINLFETR.

This chain is Putative F-box protein At1g47765, found in Arabidopsis thaliana (Mouse-ear cress).